Here is a 218-residue protein sequence, read N- to C-terminus: Uracil-DNA glycosylase (218 aa).

Asp-68 (proton acceptor) is an active-site residue.

This sequence belongs to the uracil-DNA glycosylase (UDG) superfamily. UNG family. Homodimer. Interacts with protein OPG148. Component of the Uracil-DNA glycosylase(UDG)-OPG148-polymerase complex; OPG148 and UDG form a heterodimeric processivity factor that associates with OPG71 to form the processive polymerase holoenzyme.

It catalyses the reaction Hydrolyzes single-stranded DNA or mismatched double-stranded DNA and polynucleotides, releasing free uracil.. Functionally, plays an essential role in viral replication as a component of the DNA polymerase processivity factor. Excises uracil residues from the DNA which can arise as a result of misincorporation of dUMP residues by DNA polymerase or due to deamination of cytosine. In Variola virus, this protein is Uracil-DNA glycosylase (OPG116).